The sequence spans 60 residues: Conotoxin Pu5.6 (60 aa).

The signal sequence occupies residues 1-19 (MRCVPVFVILLLLIASAAS). A propeptide spanning residues 20–47 (IDAQQKTKDDAPLTSLNDNALQQHWNKR) is cleaved from the precursor.

Belongs to the conotoxin T superfamily. Post-translationally, contains 2 disulfide bonds that can be either 'C1-C3, C2-C4' or 'C1-C4, C2-C3', since these disulfide connectivities have been observed for conotoxins with cysteine framework V (for examples, see AC P0DQQ7 and AC P81755). Expressed by the venom duct.

The protein localises to the secreted. The sequence is that of Conotoxin Pu5.6 from Conus pulicarius (Flea-bitten cone).